The following is a 493-amino-acid chain: Glycerol kinase (493 aa).

Residue threonine 12 coordinates ADP. Positions 12, 13, and 14 each coordinate ATP. Threonine 12 contacts sn-glycerol 3-phosphate. Residue arginine 16 coordinates ADP. 4 residues coordinate sn-glycerol 3-phosphate: arginine 82, glutamate 83, tyrosine 132, and aspartate 239. 5 residues coordinate glycerol: arginine 82, glutamate 83, tyrosine 132, aspartate 239, and glutamine 240. ADP-binding residues include threonine 261 and glycine 303. Threonine 261, glycine 303, glutamine 307, and glycine 402 together coordinate ATP. The ADP site is built by glycine 402 and asparagine 406.

Belongs to the FGGY kinase family.

The catalysed reaction is glycerol + ATP = sn-glycerol 3-phosphate + ADP + H(+). It participates in polyol metabolism; glycerol degradation via glycerol kinase pathway; sn-glycerol 3-phosphate from glycerol: step 1/1. Its function is as follows. Key enzyme in the regulation of glycerol uptake and metabolism. Catalyzes the phosphorylation of glycerol to yield sn-glycerol 3-phosphate. The chain is Glycerol kinase from Thermococcus gammatolerans (strain DSM 15229 / JCM 11827 / EJ3).